The sequence spans 523 residues: Cytochrome P450 CYP82J17 (523 aa).

A helical transmembrane segment spans residues 4–24 (FLSQPITIVLAILSVLLYNIW). Residue Cys462 coordinates heme.

It belongs to the cytochrome P450 family. Mainly expressed in leaves and seed pods and, to a lower extent, in flowers and stems.

The protein localises to the membrane. It functions in the pathway steroid metabolism; cholesterol metabolism. Its function is as follows. Involved in the biosynthesis of spiroketal steroid and saponin natural products from cholesterol such as diosgenin and analogs (e.g. furostanol and spirostanol), plant defense compounds used as main precursors for the industrial production of steroid hormones. During the 5,6-spiroketalization of cholesterol, may catalyze the 27-monohydroxylation of furostanol-type steroid to an intermediate product that undergoes a stereospecific formation of the terminal heterocycle to yield diosgenin. This is Cytochrome P450 CYP82J17 from Trigonella foenum-graecum (Fenugreek).